Consider the following 159-residue polypeptide: MSRQTPARKRRKKYSEKSDAIYHNRLVNMLVNRILKNGKKALAYKIFYRSMKTIYENTNINPLLIIRQAIQTLTPKVMVKARRVTGTTHQIPIDVKPKQGTILAIRWLLESSRKRSGQTMHDKLSHEIMDAARNKGHAIRKKEETHKMAESNRAXAHYR.

The disordered stretch occupies residues 137 to 159; sequence HAIRKKEETHKMAESNRAXAHYR. The segment covering 141-150 has biased composition (basic and acidic residues); the sequence is KKEETHKMAE.

It belongs to the universal ribosomal protein uS7 family. Part of the 30S ribosomal subunit.

The protein resides in the plastid. It is found in the chloroplast. Its function is as follows. One of the primary rRNA binding proteins, it binds directly to 16S rRNA where it nucleates assembly of the head domain of the 30S subunit. This Sciadopitys verticillata (Japanese umbrella-pine) protein is Small ribosomal subunit protein uS7c (rps7).